The chain runs to 202 residues: Endothelin-1 (202 aa).

A signal peptide spans 1–25; sequence MDYFPMIFALLFVAFQGAPEAAVLG. Positions 26 to 50 are excised as a propeptide; the sequence is TELSAGAEDGGEKPAPATPWRPRRS. 2 disulfides stabilise this stretch: Cys-53/Cys-67 and Cys-55/Cys-63. The propeptide occupies 74–202; that stretch reads VNTPEHVVPY…DKKVIYNRAH (129 aa). The interval 110–124 is endothelin-like; that stretch reads CQCASQTDKKCWNFC.

It belongs to the endothelin/sarafotoxin family.

Its subcellular location is the secreted. Endothelins are endothelium-derived vasoconstrictor peptides. Probable ligand for G-protein coupled receptors EDNRA and EDNRB which activates PTK2B, BCAR1, BCAR3 and, GTPases RAP1 and RHOA cascade in glomerular mesangial cells. Also binds the DEAR/FBXW7-AS1 receptor. Promotes mesenteric arterial wall remodeling via activation of ROCK signaling and subsequent colocalization of NFATC3 with F-actin filaments. NFATC3 then translocates to the nucleus where it subsequently promotes the transcription of the smooth muscle hypertrophy and differentiation marker ACTA2. The sequence is that of Endothelin-1 (EDN1) from Bos taurus (Bovine).